We begin with the raw amino-acid sequence, 4923 residues long: Bridge-like lipid transfer protein family member 1 (4923 aa).

The chain crosses the membrane as a helical span at residues 25–45; the sequence is FVWLLVATIMSCGWIIYLTYY. Disordered regions lie at residues 160-179, 606-631, 1203-1277, 1300-1334, 1357-1400, 1471-1494, 1630-1660, 1878-1948, 2191-2235, 2262-2281, 2355-2375, 2550-2655, 2885-2910, 3564-3596, 3645-3695, 3739-3797, 3848-3884, 4017-4071, 4102-4124, 4249-4309, and 4797-4827; these read NRDE…SVHI, HSKS…KPRW, SLHV…SARL, FSSE…DSST, TEEF…SVEG, TNKR…SEES, SAAK…DLSI, RDGV…PDSS, SKSH…LQCN, PHRA…RTGN, NTLD…QEDL, RYTA…SEQS, IRQP…VSIN, YSNS…IKVE, FSPT…RKSA, LHPS…SLQS, GMRD…AKGK, PTSA…TGPP, AVTG…SSVT, DGQT…AAAQ, and RMFA…EKEE. Positions 1210 to 1226 are enriched in low complexity; it reads SHSSASSSEENSSSSAA. A compositionally biased stretch (polar residues) spans 1237 to 1248; it reads PSPSTELMNVTT. The span at 1260–1271 shows a compositional bias: low complexity; it reads SPLRSPLKRQSS. The segment covering 1641-1658 has biased composition (polar residues); the sequence is TEGTTPGSLSTPHGQTDL. A compositionally biased stretch (low complexity) spans 1887 to 1898; that stretch reads SSGSQTGSGYST. Residues 1907 to 1920 are compositionally biased toward polar residues; that stretch reads NDAQSPASEPNNNS. Positions 1921–1931 are enriched in acidic residues; the sequence is DSDEQDEGVES. Polar residues-rich tracts occupy residues 2208–2218 and 2267–2281; these read PYQSLSYTSGD and EQTA…RTGN. Residues 2550 to 2560 show a composition bias toward polar residues; the sequence is RYTAGSSSPTP. Residues 2606–2624 show a composition bias toward basic and acidic residues; that stretch reads TRSREPRGRGTLGRSERRT. Over residues 3581 to 3595 the composition is skewed to basic and acidic residues; sequence KRSDRPREDLPDIKV. A compositionally biased stretch (basic and acidic residues) spans 3746–3770; it reads TEHEDLALRRSCERSSRSLDQDSPP. The span at 4017-4039 shows a compositional bias: polar residues; it reads PTSATYPSEGQHTPSSTPPSVHN. Positions 4044 to 4056 are enriched in low complexity; sequence PGGPSTGLGSPLG. Composition is skewed to polar residues over residues 4249-4268, 4276-4286, and 4804-4814; these read DGQT…TPSH, TGRTRSVSDSS, and GQKSPTTQQDE. Residues 4816–4827 are compositionally biased toward basic and acidic residues; that stretch reads SSDKKEEREKEE.

It is found in the cell membrane. The protein localises to the endoplasmic reticulum membrane. Its subcellular location is the mitochondrion membrane. Its function is as follows. Tube-forming lipid transport protein which provides phosphatidylethanolamine for glycosylphosphatidylinositol (GPI) anchor synthesis in the endoplasmic reticulum. Plays a role in endosomal trafficking and endosome recycling. Also involved in the actin cytoskeleton and cilia structural dynamics. Acts as a regulator of phagocytosis. This Danio rerio (Zebrafish) protein is Bridge-like lipid transfer protein family member 1 (bltp1).